The chain runs to 50 residues: U37-theraphotoxin-Cg1a (50 aa).

The signal sequence occupies residues 1–19 (MRVLLIIAGLALLSVVCYT).

This sequence belongs to the neurotoxin 10 (Hwtx-1) family. 67 (Jztx-67) subfamily. As to expression, expressed by the venom gland.

It localises to the secreted. The protein is U37-theraphotoxin-Cg1a of Chilobrachys guangxiensis (Chinese earth tiger tarantula).